The sequence spans 302 residues: 33 kDa chaperonin (302 aa).

Intrachain disulfides connect Cys-234–Cys-236 and Cys-267–Cys-270.

Belongs to the HSP33 family. Under oxidizing conditions two disulfide bonds are formed involving the reactive cysteines. Under reducing conditions zinc is bound to the reactive cysteines and the protein is inactive.

It is found in the cytoplasm. Its function is as follows. Redox regulated molecular chaperone. Protects both thermally unfolding and oxidatively damaged proteins from irreversible aggregation. Plays an important role in the bacterial defense system toward oxidative stress. This Neisseria gonorrhoeae (strain ATCC 700825 / FA 1090) protein is 33 kDa chaperonin.